Reading from the N-terminus, the 655-residue chain is Sphingomyelin phosphodiesterase 3 (655 aa).

The Cytoplasmic segment spans residues 1–10 (MVLYTTPFPN). The segment at residues 11-31 (SCLSALHAVSWALIFPCYWLV) is an intramembrane region (helical). At 32–64 (DRLLASFIPTTYEKRQRADDPCCLQLFCTVLFT) the chain is on the cytoplasmic side. S-palmitoyl cysteine attachment occurs at residues C53, C54, and C59. The helical intramembrane region spans 65–85 (PVYLALLVAALPFAFLGFIFW). The Cytoplasmic segment spans residues 86–655 (SPLQSARRPY…LMVSAGEEEA (570 aa)). S178 is subject to Phosphoserine. The tract at residues 209 to 318 (VEYKGDGGRH…SGGSGEPGAN (110 aa)) is disordered. Composition is skewed to basic and acidic residues over residues 211 to 221 (YKGDGGRHPSD) and 246 to 255 (GGEEGGRPQE). S289 carries the post-translational modification Phosphoserine. Residue E362 coordinates Mg(2+). S-palmitoyl cysteine attachment occurs at residues C395 and C396. The Proton acceptor role is filled by H639.

Belongs to the neutral sphingomyelinase family. It depends on Mg(2+) as a cofactor. Palmitoylated, palmitoylation-deficient proteins are targeted for lysosomal degradation. As to expression, predominantly expressed in brain (at protein level).

The protein localises to the golgi apparatus membrane. It is found in the cell membrane. It catalyses the reaction a sphingomyelin + H2O = phosphocholine + an N-acylsphing-4-enine + H(+). It carries out the reaction N-(15Z-tetracosenoyl)sphing-4-enine-1-phosphocholine + H2O = N-(15Z-tetracosenoyl)-sphing-4-enine + phosphocholine + H(+). The enzyme catalyses N-(tetracosanoyl)-sphing-4-enine-1-phosphocholine + H2O = N-tetracosanoyl-sphing-4-enine + phosphocholine + H(+). The catalysed reaction is N-(hexadecanoyl)-sphing-4-enine-1-phosphocholine + H2O = N-hexadecanoylsphing-4-enine + phosphocholine + H(+). It catalyses the reaction an N-(acyl)-sphingosylphosphocholine + H2O = an N-acyl-sphingoid base + phosphocholine + H(+). It carries out the reaction 1-hexadecanoyl-sn-glycero-3-phosphocholine + H2O = 1-hexadecanoyl-sn-glycerol + phosphocholine + H(+). The enzyme catalyses 1-O-octadecyl-sn-glycero-3-phosphocholine + H2O = 1-O-octadecyl-sn-glycerol + phosphocholine + H(+). The catalysed reaction is a sphingosylphosphocholine + H2O = a sphingoid base + phosphocholine + H(+). It participates in lipid metabolism; sphingolipid metabolism. Inhibited by nSMase inhibitor GW4869. Binding of anionic phospholipids (APLs) such as phosphatidylserine (PS) and phosphatidic acid (PA) increases enzymatic activity. Its function is as follows. Catalyzes the hydrolysis of sphingomyelin to form ceramide and phosphocholine. Ceramide mediates numerous cellular functions, such as apoptosis and growth arrest, and is capable of regulating these 2 cellular events independently. Also hydrolyzes sphingosylphosphocholine. Regulates the cell cycle by acting as a growth suppressor in confluent cells. Probably acts as a regulator of postnatal development and participates in bone and dentin mineralization. Binds to anionic phospholipids (APLs) such as phosphatidylserine (PS) and phosphatidic acid (PA) that modulate enzymatic activity and subcellular location. May be involved in IL-1-beta-induced JNK activation in hepatocytes. May act as a mediator in transcriptional regulation of NOS2/iNOS via the NF-kappa-B activation under inflammatory conditions. In Mus musculus (Mouse), this protein is Sphingomyelin phosphodiesterase 3.